We begin with the raw amino-acid sequence, 190 residues long: UPF0340 protein BC_5317 (190 aa).

The protein belongs to the UPF0340 family.

This is UPF0340 protein BC_5317 from Bacillus cereus (strain ATCC 14579 / DSM 31 / CCUG 7414 / JCM 2152 / NBRC 15305 / NCIMB 9373 / NCTC 2599 / NRRL B-3711).